The primary structure comprises 102 residues: Urease subunit beta (102 aa).

This sequence belongs to the urease beta subunit family. As to quaternary structure, heterotrimer of UreA (gamma), UreB (beta) and UreC (alpha) subunits. Three heterotrimers associate to form the active enzyme.

Its subcellular location is the cytoplasm. The catalysed reaction is urea + 2 H2O + H(+) = hydrogencarbonate + 2 NH4(+). Its pathway is nitrogen metabolism; urea degradation; CO(2) and NH(3) from urea (urease route): step 1/1. The sequence is that of Urease subunit beta from Acinetobacter baylyi (strain ATCC 33305 / BD413 / ADP1).